A 501-amino-acid chain; its full sequence is MTNHSVILCILDGWGNNKNSQFNAIAQADTPYWDSIISQYPQSNIVTHGPDVGLPDRQIGNSEVGHISLGSGRIVLQDLCRINEEIKNIRKNTHLLEFTEQIKRNNGICHIAGLLSDGGIHSSLSHMLDIIDALSYLKIQVVIHIFLDGRDTPPISALKYINILCSHIKDLSNVSIATISGRYYSMDRDNRLDRTTKAYNSIAFGHGKRYEDPISAVQDNYNAGITDEFIIPCVIGNYQGMNPTDGFIMTNFRSDRVIQILKMITEDQNTNHITLKNTIGMIKYSNELNIPCLFPNKKISNTLGEIISNQQLHQLRIAETEKYAHVTFFFNGGREEVFENEERIIIPSPSVTTYDLVPEMSAYEITDTLIKKINLQKYSLIIINYANADMVGHTGNIEATKKAITTLDQCLGKILKCIHNTNYILVITADHGNAEEMFDVQNNMPYTAHTLNPVPFVVCNYPKKIKLKNGRLSDVAPTILEILNIKQPEEMTGISLIDTSN.

Mn(2+) is bound by residues Asp-12 and Ser-62. Ser-62 functions as the Phosphoserine intermediate in the catalytic mechanism. Substrate is bound by residues His-121, 150-151, Arg-182, Arg-188, 253-256, and Lys-322; these read RD and RSDR. 5 residues coordinate Mn(2+): Asp-389, His-393, Asp-430, His-431, and His-449.

It belongs to the BPG-independent phosphoglycerate mutase family. Monomer. Requires Mn(2+) as cofactor.

It carries out the reaction (2R)-2-phosphoglycerate = (2R)-3-phosphoglycerate. It functions in the pathway carbohydrate degradation; glycolysis; pyruvate from D-glyceraldehyde 3-phosphate: step 3/5. Functionally, catalyzes the interconversion of 2-phosphoglycerate and 3-phosphoglycerate. This chain is 2,3-bisphosphoglycerate-independent phosphoglycerate mutase, found in Ehrlichia ruminantium (strain Welgevonden).